The primary structure comprises 111 residues: Ribulose bisphosphate carboxylase small subunit (111 aa).

This sequence belongs to the RuBisCO small chain family. In terms of assembly, heterohexadecamer of 8 large and 8 small subunits. The CcmM short form purifies from carboxysomes in complex with both RuBisCO subunits; a second complex with full-length CcmM and RuBisCO also includes carbonic anhydrase (CA, ccaA). RuBisCO-CcmM complexes are probably associated with the carboxysome shell. Isolated reduced and oxidized SSUL1 binds holo-RuBisCO (RbcL(8)-RbcS(8)) but not either subunit octamer alone; RuBisCO has a higher affinity for reduced SSUL1.

It localises to the carboxysome. RuBisCO catalyzes two reactions: the carboxylation of D-ribulose 1,5-bisphosphate, the primary event in carbon dioxide fixation, as well as the oxidative fragmentation of the pentose substrate in the photorespiration process. Both reactions occur simultaneously and in competition at the same active site. In terms of biological role, beta-carboxysome assembly initiates when soluble RuBisCO aggregates is condensed into a liquid matrix in a pre-carboxysome by the RbcS-like domains of probably both CcmM58 and CcmM35. CcmN interacts with the N-terminus of CcmM58, and then recruits the CcmK2 major shell protein via CcmN's encapsulation peptide. Shell formation requires CcmK proteins and CcmO. CcmL caps the otherwise elongated carboxysome. Once fully encapsulated carboxysomes are formed, they migrate within the cell probably via interactions with the cytoskeleton. This Synechococcus elongatus (strain ATCC 33912 / PCC 7942 / FACHB-805) (Anacystis nidulans R2) protein is Ribulose bisphosphate carboxylase small subunit.